Consider the following 272-residue polypeptide: MKPYLAAALQMTSRPNLTENLQEAEELIDLAVRQGAELVGLPENFAFLGNETEKLEQATAIATATEKFLQTMAQRFQVTILAGGFPFPVAGEAGKAYNTATLIAPNGQELARYHKVHLFDVNVPDGNTYWESATVMAGQKYPPVYHSDSFGNLGLSICYDVRFPELYRYLSRQGADVLFVPAAFTAYTGKDHWQVLLQARAIENTCYVIAPAQTGCHYERRHTHGHAMIIDPWGVILADAGEKPGLAIAEINPDRLKQVRQQMPSLQHRVFV.

In terms of domain architecture, CN hydrolase spans 1–253 (MKPYLAAALQ…PGLAIAEINP (253 aa)). Residue glutamate 43 is the Proton acceptor of the active site. Lysine 115 functions as the Proton donor in the catalytic mechanism. The Nucleophile role is filled by cysteine 158.

Belongs to the carbon-nitrogen hydrolase superfamily. NIT1/NIT2 family.

It carries out the reaction N-(4-oxoglutaryl)-L-cysteinylglycine + H2O = L-cysteinylglycine + 2-oxoglutarate. Its function is as follows. Hydrolyzes deaminated glutathione (dGSH, 2-oxoglutaramate) to alpha-ketoglutarate (alpha-KG) and cysteinylglycine (specific activity 7.77 umol/min/mg), hydrolyzes alpha-ketoglutaramate (a-KGM, specific activity 2.13 umol/min/mg), has no activity on glutathione or L-glutamine. May function as a metabolite repair enzyme. The protein is Deaminated glutathione amidase of Synechocystis sp. (strain PCC 6803 / GT-S).